The primary structure comprises 796 residues: Endonuclease MutS2 (796 aa).

Residue 339–346 (GPNTGGKT) coordinates ATP. The interval 620–644 (EKLGDTDSSLVSKAKKNRKQHKPSD) is disordered. In terms of domain architecture, Smr spans 721 to 796 (LNIIGKRVDE…DHGVTIVEFK (76 aa)).

It belongs to the DNA mismatch repair MutS family. MutS2 subfamily. Homodimer. Binds to stalled ribosomes, contacting rRNA.

Endonuclease that is involved in the suppression of homologous recombination and thus may have a key role in the control of bacterial genetic diversity. Functionally, acts as a ribosome collision sensor, splitting the ribosome into its 2 subunits. Detects stalled/collided 70S ribosomes which it binds and splits by an ATP-hydrolysis driven conformational change. Acts upstream of the ribosome quality control system (RQC), a ribosome-associated complex that mediates the extraction of incompletely synthesized nascent chains from stalled ribosomes and their subsequent degradation. Probably generates substrates for RQC. The protein is Endonuclease MutS2 of Lachnoclostridium phytofermentans (strain ATCC 700394 / DSM 18823 / ISDg) (Clostridium phytofermentans).